A 989-amino-acid chain; its full sequence is Voltage-gated delayed rectifier potassium channel KCNH1 (989 aa).

The Cytoplasmic segment spans residues 1-220; sequence MTMAGGRRGL…LHYCVFKTTW (220 aa). A PAS domain is found at 14-94; the sequence is QNTFLENIVR…QTFENYEMNS (81 aa). The 53-residue stretch at 93 to 145 folds into the PAC domain; that stretch reads NSFEILMYKKNRTPVWFFVKIAPIRNEQDKVVLFLCTFSDITAFKQPIEDDSC. The interval 151–162 is required for phosphatidylinositol bisphosphate binding; sequence FARLTRALTSSR. Residues 221-241 traverse the membrane as a helical segment; it reads DWIILILTFYTAILVPYNVSF. Residues 242–248 are Extracellular-facing; sequence KTRQNNV. The helical transmembrane segment at 249 to 269 threads the bilayer; that stretch reads AWLVVDSIVDVIFLVDIVLNF. Over 270–290 the chain is Cytoplasmic; that stretch reads HTTFVGPAGEVISDPKLIRMN. The helical transmembrane segment at 291-309 threads the bilayer; that stretch reads YLKTWFVIDLLSCLPYDVI. Over 310 to 345 the chain is Extracellular; sequence NAFENVDEVSAFMGDPGKIGFADQIPPPLEGRESQG. A helical; Voltage-sensor membrane pass occupies residues 346 to 368; sequence ISSLFSSLKVVRLLRLGRVARKL. Topologically, residues 369–377 are cytoplasmic; sequence DHYIEYGAA. A helical membrane pass occupies residues 378 to 399; the sequence is VLVLLVCVFGLAAHWMACIWYS. The Extracellular segment spans residues 400–448; that stretch reads IGDYEIFDEDTKTIRNNSWLYQLAMDIGTPYQFNGSGSGKWEGGPSKNS. Asn415 and Asn433 each carry an N-linked (GlcNAc...) asparagine glycan. The pore-forming intramembrane region spans 449 to 470; it reads VYISSLYFTMTSLTSVGFGNIA. Residues 463-468 carry the Selectivity filter motif; it reads SVGFGN. Over 471-477 the chain is Extracellular; that stretch reads PSTDIEK. Residues 478 to 498 traverse the membrane as a helical segment; the sequence is IFAVAIMMIGSLLYATIFGNV. The Cytoplasmic segment spans residues 499 to 989; the sequence is TTIFQQMYAN…ESERDIFGAS (491 aa). The calmodulin-binding stretch occupies residues 673-770; sequence KRDALQKVLE…LDDLDVEKGN (98 aa). The interaction with cyclic nucleotide-binding pocket stretch occupies residues 699-701; the sequence is YNL. The span at 855 to 879 shows a compositional bias: basic and acidic residues; the sequence is KAESMETLPERTKASGEATLKKTDS. Disordered regions lie at residues 855–886 and 962–989; these read KAESMETLPERTKASGEATLKKTDSCDSGITK and RSSQSPQELFEISRPQSPESERDIFGAS. Residues 924–964 form a CAD (involved in subunit assembly) region; the sequence is ATVLEVRHELKEDIKALNAKMTNIEKQLSEILRILTSRRSS. Phosphoserine is present on residues Ser974, Ser978, and Ser981. Over residues 980–989 the composition is skewed to basic and acidic residues; that stretch reads ESERDIFGAS.

Belongs to the potassium channel family. H (Eag) (TC 1.A.1.20) subfamily. Kv10.1/KCNH1 sub-subfamily. As to quaternary structure, homomultimer. The potassium channel is composed of a homo- or heterotetrameric complex of pore-forming alpha subunits that can associate with modulating beta subunits. Heteromultimer with KCNH5/EAG2. Interacts with ALG10B. Interacts with RABEP1. Interacts (via C-terminus) with CTTN. Interacts (via C-terminal cytoplasmic region) with Ca(2+)-bound calmodulin. Interacts with the spider kappa-theraphotoxin-Aa1a and mu/kappa-theraphotoxin-Ap1a. In terms of processing, channel activity is regulated via tyrosine phosphorylation/dephosphorylation by SRC and PTPN6. As to expression, highly expressed in brain and in myoblasts at the onset of fusion, but not in other tissues. Detected in HeLa (cervical carcinoma), SH-SY5Y (neuroblastoma) and MCF-7 (epithelial tumor) cells, but not in normal epithelial cells.

Its subcellular location is the cell membrane. It localises to the nucleus inner membrane. The protein localises to the cell projection. It is found in the dendrite. The protein resides in the axon. Its subcellular location is the presynaptic cell membrane. It localises to the perikaryon. The protein localises to the postsynaptic density membrane. It is found in the early endosome membrane. It carries out the reaction K(+)(in) = K(+)(out). Its activity is regulated as follows. Channel activity is inhibited by interaction with Ca(2+)-bound calmodulin. Interaction of a single pore-forming alpha subunit with a calmodulin chain is sufficient to promote channel closure. Channel activity is not regulated by cyclic nucleotides. Channel activity is inhibited by binding intracellular phosphatidylinositol-3,5-bisphosphate and phosphatidylinositol-4,5-bisphosphate (PIP2), but is not inhibited by phosphatidylinositol 4-phosphate. Inhibited by the spider kappa-theraphotoxin-Aa1a and mu/kappa-theraphotoxin-Ap1a. Its function is as follows. Pore-forming (alpha) subunit of a voltage-gated delayed rectifier potassium channel that mediates outward-rectifying potassium currents which, on depolarization, reaches a steady-state level and do not inactivate. The activation kinetics depend on the prepulse potential and external divalent cation concentration. With negative prepulses, the current activation is delayed and slowed down several fold, whereas more positive prepulses speed up activation. The time course of activation is biphasic with a fast and a slowly activating current component. Activates at more positive membrane potentials and exhibit a steeper activation curve. Channel properties are modulated by subunit assembly. Mediates IK(NI) current in myoblasts. Involved in the regulation of cell proliferation and differentiation, in particular adipogenic and osteogenic differentiation in bone marrow-derived mesenchymal stem cells (MSCs). This Homo sapiens (Human) protein is Voltage-gated delayed rectifier potassium channel KCNH1.